Reading from the N-terminus, the 237-residue chain is Opacity protein opA57 (237 aa).

A signal peptide is located at residue A1.

This sequence belongs to the opacity porin family.

It localises to the cell outer membrane. In terms of biological role, implicated in a number of adherence functions. OPA proteins are implicated in pathogenesis and are subject to phase variation. This is Opacity protein opA57 (opaK) from Neisseria gonorrhoeae.